Consider the following 440-residue polypeptide: MNCSELLPPASVRGMRELQRAEFQKRVQVPQLRVPEQQVQRVIPLVKKFLLKMEHMHPVRAVDKSREILLHPMPIKAWESLPTEDLQKQQVTQENFSFVELELNYENWSANEILKSVLPEEEEGMTSYSRIGHIVHLNLRDHLLPYKQLIGEVLRDKLPNCRTVVNKASSIDNTYRNFQLELICGEAEYQVETKENGIPFEFDFSKVYWNPRLSTEHERIVKLLQPGDVLYDVFAGVGPFSVPAAKKRCHVLANDLNPVSFHWLQHNAKRNKCLSNIKMSNKDGREFILKELRADLLQRLRLTDTSSYATHITMNLPAMAVEFLDAFRGLYTDNELADISDAVVFPTVHVYSFAKGENTKALVRAQVEQNLASTLDEKQLQGISFVRNVAPNKDMYRVSFKLTRHLLTTSKEAEANNVRKRCAEDEKVDPEVAATKVKCV.

S-adenosyl-L-methionine-binding positions include histidine 217, 255-256 (DL), 283-284 (DG), and asparagine 315.

Belongs to the class I-like SAM-binding methyltransferase superfamily. TRM5/TYW2 family. Monomer.

The protein resides in the mitochondrion matrix. It is found in the nucleus. It localises to the cytoplasm. The enzyme catalyses guanosine(37) in tRNA + S-adenosyl-L-methionine = N(1)-methylguanosine(37) in tRNA + S-adenosyl-L-homocysteine + H(+). Specifically methylates the N1 position of guanosine-37 in various cytoplasmic and mitochondrial tRNAs. Methylation is not dependent on the nature of the nucleoside 5' of the target nucleoside. This is the first step in the biosynthesis of wybutosine (yW), a modified base adjacent to the anticodon of tRNAs and required for accurate decoding. The sequence is that of tRNA (guanine(37)-N(1))-methyltransferase from Drosophila pseudoobscura pseudoobscura (Fruit fly).